The primary structure comprises 78 residues: Probable [Fe-S]-dependent transcriptional repressor (78 aa).

Cysteine 56, cysteine 61, cysteine 64, and cysteine 70 together coordinate iron-sulfur cluster.

Belongs to the FeoC family.

In terms of biological role, may function as a transcriptional regulator that controls feoABC expression. The polypeptide is Probable [Fe-S]-dependent transcriptional repressor (Salmonella agona (strain SL483)).